The chain runs to 321 residues: Tetraacyldisaccharide 4'-kinase (321 aa).

54–61 (SVGGTGKT) is an ATP binding site.

Belongs to the LpxK family.

The catalysed reaction is a lipid A disaccharide + ATP = a lipid IVA + ADP + H(+). Its pathway is glycolipid biosynthesis; lipid IV(A) biosynthesis; lipid IV(A) from (3R)-3-hydroxytetradecanoyl-[acyl-carrier-protein] and UDP-N-acetyl-alpha-D-glucosamine: step 6/6. Functionally, transfers the gamma-phosphate of ATP to the 4'-position of a tetraacyldisaccharide 1-phosphate intermediate (termed DS-1-P) to form tetraacyldisaccharide 1,4'-bis-phosphate (lipid IVA). This Rickettsia typhi (strain ATCC VR-144 / Wilmington) protein is Tetraacyldisaccharide 4'-kinase.